The following is a 289-amino-acid chain: F-box protein PP2-A11 (289 aa).

An F-box domain is found at 23 to 69; that stretch reads QPGLGDLPESCVALILQNLDPVEICRFSKLNTAFHGASWADFVWESK.

In terms of assembly, part of a SCF (ASK-cullin-F-box) protein ligase complex. Interacts with SKP1A/ASK1.

The protein resides in the nucleus. The protein operates within protein modification; protein ubiquitination. In terms of biological role, component of SCF(ASK-cullin-F-box) E3 ubiquitin ligase complexes, which may mediate the ubiquitination and subsequent proteasomal degradation of target proteins. This chain is F-box protein PP2-A11 (PP2A11), found in Arabidopsis thaliana (Mouse-ear cress).